The following is a 263-amino-acid chain: uncharacterized protein (263 aa).

The WD repeat unit spans residues 53–89; it reads SAVTASKFSPDGRWLVNLTDQGYVQLWDVHKGERVKT.

This is an uncharacterized protein from Deinococcus radiodurans (strain ATCC 13939 / DSM 20539 / JCM 16871 / CCUG 27074 / LMG 4051 / NBRC 15346 / NCIMB 9279 / VKM B-1422 / R1).